Here is a 124-residue protein sequence, read N- to C-terminus: Fluoride-specific ion channel FluC (124 aa).

Transmembrane regions (helical) follow at residues 5 to 25, 32 to 52, 61 to 81, and 94 to 114; these read LLVSLGAVAGAILRWQLAVWF, FAFGTLFVNLCGCFLIGITLG, LLFVTGFLGSFTTFSSFSAEV, and LAVISAHLIGGLVLTILGILV. Na(+)-binding residues include G69 and T72.

This sequence belongs to the fluoride channel Fluc/FEX (TC 1.A.43) family.

It localises to the cell inner membrane. It carries out the reaction fluoride(in) = fluoride(out). With respect to regulation, na(+) is not transported, but it plays an essential structural role and its presence is essential for fluoride channel function. Fluoride-specific ion channel. Important for reducing fluoride concentration in the cell, thus reducing its toxicity. The protein is Fluoride-specific ion channel FluC of Haemophilus ducreyi (strain 35000HP / ATCC 700724).